A 415-amino-acid polypeptide reads, in one-letter code: Serine hydroxymethyltransferase 2 (415 aa).

Residues L121 and 125–127 (GHL) contribute to the (6S)-5,6,7,8-tetrahydrofolate site. N6-(pyridoxal phosphate)lysine is present on K229.

Belongs to the SHMT family. In terms of assembly, homodimer. Pyridoxal 5'-phosphate is required as a cofactor.

The protein resides in the cytoplasm. The catalysed reaction is (6R)-5,10-methylene-5,6,7,8-tetrahydrofolate + glycine + H2O = (6S)-5,6,7,8-tetrahydrofolate + L-serine. Its pathway is one-carbon metabolism; tetrahydrofolate interconversion. It participates in amino-acid biosynthesis; glycine biosynthesis; glycine from L-serine: step 1/1. Its function is as follows. Catalyzes the reversible interconversion of serine and glycine with tetrahydrofolate (THF) serving as the one-carbon carrier. This reaction serves as the major source of one-carbon groups required for the biosynthesis of purines, thymidylate, methionine, and other important biomolecules. Also exhibits THF-independent aldolase activity toward beta-hydroxyamino acids, producing glycine and aldehydes, via a retro-aldol mechanism. This is Serine hydroxymethyltransferase 2 from Bordetella parapertussis (strain 12822 / ATCC BAA-587 / NCTC 13253).